The sequence spans 188 residues: Ribosome-recycling factor (188 aa).

The protein belongs to the RRF family.

The protein localises to the cytoplasm. Responsible for the release of ribosomes from messenger RNA at the termination of protein biosynthesis. May increase the efficiency of translation by recycling ribosomes from one round of translation to another. The sequence is that of Ribosome-recycling factor from Gluconobacter oxydans (strain 621H) (Gluconobacter suboxydans).